We begin with the raw amino-acid sequence, 93 residues long: Toxin RelE1 (93 aa).

It belongs to the RelE toxin family.

Toxic component of a type II toxin-antitoxin (TA) system. Its toxic effect is neutralized by coexpression with cognate antitoxin RelB1 but no other ParD or RelB antitoxin. This chain is Toxin RelE1 (relE1), found in Caulobacter vibrioides (strain ATCC 19089 / CIP 103742 / CB 15) (Caulobacter crescentus).